A 138-amino-acid polypeptide reads, in one-letter code: Large ribosomal subunit protein uL16 (138 aa).

The segment covering 1–17 (MLIPRKVKHRKQHHPRQ) has biased composition (basic residues). The disordered stretch occupies residues 1-22 (MLIPRKVKHRKQHHPRQRGIAS).

The protein belongs to the universal ribosomal protein uL16 family. Part of the 50S ribosomal subunit.

In terms of biological role, binds 23S rRNA and is also seen to make contacts with the A and possibly P site tRNAs. This is Large ribosomal subunit protein uL16 from Mycobacterium tuberculosis (strain ATCC 25177 / H37Ra).